The primary structure comprises 176 residues: ATP-dependent protease subunit HslV (176 aa).

Thr2 is an active-site residue. The Na(+) site is built by Gly157, Cys160, and Thr163.

Belongs to the peptidase T1B family. HslV subfamily. In terms of assembly, a double ring-shaped homohexamer of HslV is capped on each side by a ring-shaped HslU homohexamer. The assembly of the HslU/HslV complex is dependent on binding of ATP.

Its subcellular location is the cytoplasm. The enzyme catalyses ATP-dependent cleavage of peptide bonds with broad specificity.. Its activity is regulated as follows. Allosterically activated by HslU binding. Protease subunit of a proteasome-like degradation complex believed to be a general protein degrading machinery. The sequence is that of ATP-dependent protease subunit HslV from Photorhabdus laumondii subsp. laumondii (strain DSM 15139 / CIP 105565 / TT01) (Photorhabdus luminescens subsp. laumondii).